The following is a 181-amino-acid chain: Acireductone dioxygenase (181 aa).

His-97, His-99, Glu-103, and His-141 together coordinate Fe(2+). Residues His-97, His-99, Glu-103, and His-141 each contribute to the Ni(2+) site.

This sequence belongs to the acireductone dioxygenase (ARD) family. In terms of assembly, monomer. Fe(2+) is required as a cofactor. Requires Ni(2+) as cofactor.

The enzyme catalyses 1,2-dihydroxy-5-(methylsulfanyl)pent-1-en-3-one + O2 = 3-(methylsulfanyl)propanoate + CO + formate + 2 H(+). It catalyses the reaction 1,2-dihydroxy-5-(methylsulfanyl)pent-1-en-3-one + O2 = 4-methylsulfanyl-2-oxobutanoate + formate + 2 H(+). It participates in amino-acid biosynthesis; L-methionine biosynthesis via salvage pathway; L-methionine from S-methyl-5-thio-alpha-D-ribose 1-phosphate: step 5/6. In terms of biological role, catalyzes 2 different reactions between oxygen and the acireductone 1,2-dihydroxy-3-keto-5-methylthiopentene (DHK-MTPene) depending upon the metal bound in the active site. Fe-containing acireductone dioxygenase (Fe-ARD) produces formate and 2-keto-4-methylthiobutyrate (KMTB), the alpha-ketoacid precursor of methionine in the methionine recycle pathway. Ni-containing acireductone dioxygenase (Ni-ARD) produces methylthiopropionate, carbon monoxide and formate, and does not lie on the methionine recycle pathway. This Pseudomonas paraeruginosa (strain DSM 24068 / PA7) (Pseudomonas aeruginosa (strain PA7)) protein is Acireductone dioxygenase.